The following is a 346-amino-acid chain: Methionine import ATP-binding protein MetN 1 (346 aa).

The region spanning 2–241 (IELKNVSKVF…PQHVTTKKFV (240 aa)) is the ABC transporter domain. 38–45 (GYSGAGKS) serves as a coordination point for ATP.

This sequence belongs to the ABC transporter superfamily. Methionine importer (TC 3.A.1.24) family. As to quaternary structure, the complex is composed of two ATP-binding proteins (MetN), two transmembrane proteins (MetI) and a solute-binding protein (MetQ).

Its subcellular location is the cell membrane. The catalysed reaction is L-methionine(out) + ATP + H2O = L-methionine(in) + ADP + phosphate + H(+). It catalyses the reaction D-methionine(out) + ATP + H2O = D-methionine(in) + ADP + phosphate + H(+). Its function is as follows. Part of the ABC transporter complex MetNIQ involved in methionine import. Responsible for energy coupling to the transport system. This is Methionine import ATP-binding protein MetN 1 from Bacillus cereus (strain ATCC 10987 / NRS 248).